Consider the following 626-residue polypeptide: Two-component response regulator ORR24 (626 aa).

Residues 1–22 are disordered; sequence MTVEERQGRVGGHGVSGGGGGR. A compositionally biased stretch (gly residues) spans 9–22; sequence RVGGHGVSGGGGGR. The region spanning 30-145 is the Response regulatory domain; it reads RVLAVDDDPT…QLRTIWQHVI (116 aa). A 4-aspartylphosphate modification is found at aspartate 81. A compositionally biased stretch (basic and acidic residues) spans 151–162; that stretch reads DAKNRGNDDDAG. Disordered regions lie at residues 151-215 and 400-440; these read DAKN…KKPR and LQPL…RTTN. The span at 191-202 shows a compositional bias: acidic residues; the sequence is NGDDGDDSDENS. Residues 210–269 constitute a DNA-binding region (myb-like GARP); it reads TQKKPRVVWSVELHRKFVAAVNQLGIEKAVPKKILDLMNVENITRENVASHLQKYRLYLK. Residues 400–421 are compositionally biased toward polar residues; sequence LQPLESSSQQHLSRVHSSSADP.

The protein belongs to the ARR family. Type-B subfamily. Two-component system major event consists of a His-to-Asp phosphorelay between a sensor histidine kinase (HK) and a response regulator (RR). In plants, the His-to-Asp phosphorelay involves an additional intermediate named Histidine-containing phosphotransfer protein (HPt). This multistep phosphorelay consists of a His-Asp-His-Asp sequential transfer of a phosphate group between first a His and an Asp of the HK protein, followed by the transfer to a conserved His of the HPt protein and finally the transfer to an Asp in the receiver domain of the RR protein.

Its subcellular location is the nucleus. In terms of biological role, transcriptional activator that binds specific DNA sequence. Functions as a response regulator involved in His-to-Asp phosphorelay signal transduction system. Phosphorylation of the Asp residue in the receiver domain activates the ability of the protein to promote the transcription of target genes. May directly activate some type-A response regulators in response to cytokinins. The polypeptide is Two-component response regulator ORR24 (Oryza sativa subsp. indica (Rice)).